Reading from the N-terminus, the 142-residue chain is Ribosome-binding factor A (142 aa).

The interval 118–142 (DKNGDAEVDDTQVDDEPSVDSEKGE) is disordered. Acidic residues predominate over residues 123-136 (AEVDDTQVDDEPSV).

It belongs to the RbfA family. Monomer. Binds 30S ribosomal subunits, but not 50S ribosomal subunits or 70S ribosomes.

Its subcellular location is the cytoplasm. One of several proteins that assist in the late maturation steps of the functional core of the 30S ribosomal subunit. Associates with free 30S ribosomal subunits (but not with 30S subunits that are part of 70S ribosomes or polysomes). Required for efficient processing of 16S rRNA. May interact with the 5'-terminal helix region of 16S rRNA. The sequence is that of Ribosome-binding factor A from Colwellia psychrerythraea (strain 34H / ATCC BAA-681) (Vibrio psychroerythus).